Reading from the N-terminus, the 309-residue chain is MSKFVITCIAHGENLPKETIDQIAKEITESSAKDVSINGTKKLSARATDIFIEVAGSIVQKDLKNKLTNVIDSHNDVDVIVSVDNEYRQAKKLFVFDMDSTLIYQEVIELIAAYAGVEEQVHEITERAMNNELDFKESLRERVKLLQGLQVDTLYDEIKQKLEVTKGVPELCKFLHKKNCKLAVLSGGFIQFAGFIKDQLGLDFCKANLLEVDTDGKLTGKTLGPIVDGQCKSETLLQLCNDYNVPVEASCMVGDGGNDLPAMATAGFGIAWNAKPKVQKAAPCKLNTKSMTDILYILGYTDDEIYNRQ.

The active-site Nucleophile is aspartate 97. Residues aspartate 97 and aspartate 99 each coordinate Mg(2+). Catalysis depends on aspartate 99, which acts as the Proton donor. Residues glutamate 106, arginine 142, 186-187, and lysine 232 each bind substrate; that span reads SG. Mg(2+) is bound at residue aspartate 255. Residue asparagine 258 participates in substrate binding.

This sequence belongs to the HAD-like hydrolase superfamily. SerB family. The cofactor is Mg(2+).

It carries out the reaction O-phospho-L-serine + H2O = L-serine + phosphate. The catalysed reaction is O-phospho-D-serine + H2O = D-serine + phosphate. It functions in the pathway amino-acid biosynthesis; L-serine biosynthesis; L-serine from 3-phospho-D-glycerate: step 3/3. The sequence is that of Phosphoserine phosphatase (SER2) from Saccharomyces cerevisiae (strain ATCC 204508 / S288c) (Baker's yeast).